Here is a 216-residue protein sequence, read N- to C-terminus: Uracil phosphoribosyltransferase (216 aa).

5-phospho-alpha-D-ribose 1-diphosphate-binding positions include arginine 84, arginine 109, and 137–145 (DPMLATGNT). Uracil is bound by residues isoleucine 202 and 207–209 (GDA). Aspartate 208 serves as a coordination point for 5-phospho-alpha-D-ribose 1-diphosphate.

Belongs to the UPRTase family. Mg(2+) is required as a cofactor.

It catalyses the reaction UMP + diphosphate = 5-phospho-alpha-D-ribose 1-diphosphate + uracil. The protein operates within pyrimidine metabolism; UMP biosynthesis via salvage pathway; UMP from uracil: step 1/1. With respect to regulation, allosterically activated by GTP. Its function is as follows. Catalyzes the conversion of uracil and 5-phospho-alpha-D-ribose 1-diphosphate (PRPP) to UMP and diphosphate. The sequence is that of Uracil phosphoribosyltransferase from Synechocystis sp. (strain ATCC 27184 / PCC 6803 / Kazusa).